Here is a 102-residue protein sequence, read N- to C-terminus: NADH-quinone oxidoreductase subunit K 1 (102 aa).

The next 3 membrane-spanning stretches (helical) occupy residues 5-25 (LSHY…GIFL), 31-51 (IVIL…MVAF), and 65-85 (LFIL…LVVF).

It belongs to the complex I subunit 4L family. In terms of assembly, NDH-1 is composed of 14 different subunits. Subunits NuoA, H, J, K, L, M, N constitute the membrane sector of the complex.

The protein localises to the cell inner membrane. The catalysed reaction is a quinone + NADH + 5 H(+)(in) = a quinol + NAD(+) + 4 H(+)(out). In terms of biological role, NDH-1 shuttles electrons from NADH, via FMN and iron-sulfur (Fe-S) centers, to quinones in the respiratory chain. The immediate electron acceptor for the enzyme in this species is believed to be ubiquinone. Couples the redox reaction to proton translocation (for every two electrons transferred, four hydrogen ions are translocated across the cytoplasmic membrane), and thus conserves the redox energy in a proton gradient. This chain is NADH-quinone oxidoreductase subunit K 1, found in Rhizobium etli (strain CIAT 652).